We begin with the raw amino-acid sequence, 52 residues long: Ornatin-C (52 aa).

Positions 42–44 match the Cell attachment site motif; that stretch reads RGD.

The protein belongs to the ornatin family.

It localises to the secreted. Potent inhibitor of fibrinogen interaction with platelet receptors expressed on glycoprotein IIb-IIIa complex. May prevent blood from clotting during either feeding and/or storage of ingested blood. The sequence is that of Ornatin-C from Placobdella ornata (Turtle leech).